Here is a 2319-residue protein sequence, read N- to C-terminus: Coagulation factor VIII (2319 aa).

The first 19 residues, 1–19, serve as a signal peptide directing secretion; that stretch reads MQIALFACFFLSLFNFCSS. Plastocyanin-like domains are found at residues 20 to 199 and 207 to 349; these read AIRR…LLVC and ERTQ…VDSC. The F5/8 type A 1 domain occupies 20 to 349; it reads AIRRYYLGAV…MEAYVKVDSC (330 aa). N-linked (GlcNAc...) asparagine glycosylation is present at Asn-61. Cys-173 and Cys-199 are oxidised to a cystine. 2 N-linked (GlcNAc...) asparagine glycosylation sites follow: Asn-233 and Asn-259. Tyr-367 carries the sulfotyrosine modification. 2 consecutive Plastocyanin-like domains span residues 399-573 and 583-730; these read KTWI…LLIC and NQMM…VSSC. Positions 399–730 constitute an F5/8 type A 2 domain; sequence KTWIHYISAE…MTALLKVSSC (332 aa). N-linked (GlcNAc...) asparagine glycosylation occurs at Asn-423. Cys-547 and Cys-573 are disulfide-bonded. N-linked (GlcNAc...) asparagine glycosylation occurs at Asn-601. A sulfotyrosine mark is found at Tyr-737, Tyr-738, and Tyr-742. The segment at 760 to 1640 is b; sequence SFFQNTNHPN…IPPVLKRHQR (881 aa). Residues Asn-880, Asn-958, Asn-1015, Asn-1022, Asn-1026, Asn-1044, Asn-1076, Asn-1087, Asn-1136, Asn-1161, Asn-1192, Asn-1255, Asn-1268, Asn-1273, Asn-1274, Asn-1302, Asn-1316, Asn-1340, and Asn-1378 are each glycosylated (N-linked (GlcNAc...) asparagine). The tract at residues 1530–1549 is disordered; that stretch reads WNKAKRHGESIKGKTESSKN. Over residues 1536–1548 the composition is skewed to basic and acidic residues; that stretch reads HGESIKGKTESSK. 2 positions are modified to sulfotyrosine: Tyr-1669 and Tyr-1687. Plastocyanin-like domains follow at residues 1683–1845 and 1855–2008; these read KTRH…LLIC and GRQV…SKQC. Residues 1683-2008 enclose the F5/8 type A 3 domain; sequence KTRHYFIAAV…TLFLVYSKQC (326 aa). The N-linked (GlcNAc...) asparagine glycan is linked to Asn-1797. 3 disulfides stabilise this stretch: Cys-1819/Cys-1845, Cys-2008/Cys-2156, and Cys-2161/Cys-2313. F5/8 type C domains lie at 2008–2156 and 2161–2313; these read CQIP…LMGC and CSIP…ILGC. N-linked (GlcNAc...) asparagine glycosylation occurs at Asn-2105.

This sequence belongs to the multicopper oxidase family. As to quaternary structure, interacts with vWF. vWF binding is essential for the stabilization of F8 in circulation. The binding of vWF and activation depend on the sulfation of Tyr-1669. Post-translationally, proteolytically cleaved by cathepsin CTSG to produce a partially activated form. As to expression, found in most tissues.

Its subcellular location is the secreted. The protein resides in the extracellular space. Its function is as follows. Factor VIII, along with calcium and phospholipid, acts as a cofactor for factor IXa when it converts factor X to the activated form, factor Xa. This chain is Coagulation factor VIII (F8), found in Mus musculus (Mouse).